A 207-amino-acid chain; its full sequence is Small ribosomal subunit protein uS4c (207 aa).

Positions 22–51 are disordered; sequence TQKNCTRDFPPGQHGPKKKGGGNQKTKESQ. Residues 97 to 158 enclose the S4 RNA-binding domain; that stretch reads MRLDTIIFRL…NSQNFVKNLL (62 aa).

This sequence belongs to the universal ribosomal protein uS4 family. As to quaternary structure, part of the 30S ribosomal subunit. Contacts protein S5. The interaction surface between S4 and S5 is involved in control of translational fidelity.

The protein localises to the plastid. It is found in the chloroplast. Functionally, one of the primary rRNA binding proteins, it binds directly to 16S rRNA where it nucleates assembly of the body of the 30S subunit. In terms of biological role, with S5 and S12 plays an important role in translational accuracy. The polypeptide is Small ribosomal subunit protein uS4c (rps4) (Chlorella vulgaris (Green alga)).